A 450-amino-acid chain; its full sequence is Phosphoglucosamine mutase (450 aa).

Ser-101 serves as the catalytic Phosphoserine intermediate. Mg(2+) is bound by residues Ser-101, Asp-241, Asp-243, and Asp-245. The residue at position 101 (Ser-101) is a Phosphoserine.

The protein belongs to the phosphohexose mutase family. It depends on Mg(2+) as a cofactor. In terms of processing, activated by phosphorylation.

The catalysed reaction is alpha-D-glucosamine 1-phosphate = D-glucosamine 6-phosphate. Catalyzes the conversion of glucosamine-6-phosphate to glucosamine-1-phosphate. This is Phosphoglucosamine mutase from Ligilactobacillus salivarius (strain UCC118) (Lactobacillus salivarius).